The chain runs to 632 residues: Effector protein hopAD1 (632 aa).

The disordered stretch occupies residues 13–34; the sequence is TAVDSSLPTSATSQTISNTKSR. A compositionally biased stretch (polar residues) spans 15–32; the sequence is VDSSLPTSATSQTISNTK.

The protein resides in the secreted. This Pseudomonas syringae pv. tomato (strain ATCC BAA-871 / DC3000) protein is Effector protein hopAD1 (hopAD1).